Reading from the N-terminus, the 463-residue chain is L-seryl-tRNA(Sec) selenium transferase (463 aa).

Lysine 295 carries the N6-(pyridoxal phosphate)lysine modification.

This sequence belongs to the SelA family. As to quaternary structure, homodecamer; pentamer of dimers. Binds only one seryl-tRNA(Sec) per dimer. It depends on pyridoxal 5'-phosphate as a cofactor.

Its subcellular location is the cytoplasm. The enzyme catalyses L-seryl-tRNA(Sec) + selenophosphate + H(+) = L-selenocysteinyl-tRNA(Sec) + phosphate. It participates in aminoacyl-tRNA biosynthesis; selenocysteinyl-tRNA(Sec) biosynthesis; selenocysteinyl-tRNA(Sec) from L-seryl-tRNA(Sec) (bacterial route): step 1/1. Functionally, converts seryl-tRNA(Sec) to selenocysteinyl-tRNA(Sec) required for selenoprotein biosynthesis. The chain is L-seryl-tRNA(Sec) selenium transferase from Escherichia coli O45:K1 (strain S88 / ExPEC).